The sequence spans 295 residues: Alpha-ketoglutarate-dependent dioxygenase alkB homolog 3 (295 aa).

The interval 1–48 (MGDKRQRARVQGAWATPTKSQSAARPATPARSRPSQTPGPSWRSKEQQ) is disordered. Over residues 22–35 (SAARPATPARSRPS) the composition is skewed to low complexity. Residues W115 and 141–143 (YTY) each bind substrate. The Fe2OG dioxygenase domain occupies 172–278 (TFNSLLCNFY…RVNLTFRTVY (107 aa)). L177 bears the (4R)-5-hydroxyleucine; alternate mark. L177 is subject to (4R)-5-oxoleucine; alternate. 179–181 (NFY) lines the 2-oxoglutarate pocket. Residues H191 and D193 each contribute to the Fe cation site. Position 194 (D194) interacts with substrate. H257 provides a ligand contact to Fe cation. 2-oxoglutarate-binding positions include 269–275 (RVNLTFR) and R275.

This sequence belongs to the alkB family. Interacts with the ASCC complex composed of ASCC1, ASCC2 and ASCC3. Interacts directly with ASCC3, and is thereby recruited to the ASCC complex. Interacts with OTUD4; the interaction is direct. Interacts with USP7 and USP9X. The cofactor is Fe(2+). Ubiquitinated; undergoes 'Lys-48'-linked polyubiquitination. OTUD4 promotes USP7 and USP9X-dependent deubiquitination of 'Lys-48'-polyubiquitinated ALKBH3 promoting the repair of alkylated DNA lesions.

The protein localises to the nucleus. Its subcellular location is the cytoplasm. It carries out the reaction an N(1)-methyladenosine in mRNA + 2-oxoglutarate + O2 = an adenosine in mRNA + formaldehyde + succinate + CO2. It catalyses the reaction a methylated nucleobase within DNA + 2-oxoglutarate + O2 = a nucleobase within DNA + formaldehyde + succinate + CO2. The catalysed reaction is an N(1)-methyl-2'-deoxyadenosine in single-stranded DNA + 2-oxoglutarate + O2 = a 2'-deoxyadenosine in single-stranded DNA + formaldehyde + succinate + CO2 + H(+). The enzyme catalyses an N(3)-methyl-2'-deoxycytidine in single-stranded DNA + 2-oxoglutarate + O2 = a 2'-deoxycytidine in single-stranded DNA + formaldehyde + succinate + CO2 + H(+). It carries out the reaction a 3,N(4)-etheno-2'-deoxycytidine in single-stranded DNA + 2-oxoglutarate + O2 + H2O = a 2'-deoxycytidine in single-stranded DNA + glyoxal + succinate + CO2. With respect to regulation, activated by ascorbate. In terms of biological role, dioxygenase that mediates demethylation of DNA and RNA containing 1-methyladenosine (m1A). Repairs alkylated DNA containing 1-methyladenosine (m1A) and 3-methylcytosine (m3C) by oxidative demethylation. Has a strong preference for single-stranded DNA. Able to process alkylated m3C within double-stranded regions via its interaction with ASCC3, which promotes DNA unwinding to generate single-stranded substrate needed for ALKBH3. Can repair exocyclic 3,N4-ethenocytosine adducs in single-stranded DNA. Also acts on RNA. Demethylates N(1)-methyladenosine (m1A) RNA, an epigenetic internal modification of messenger RNAs (mRNAs) highly enriched within 5'-untranslated regions (UTRs) and in the vicinity of start codons. Requires molecular oxygen, alpha-ketoglutarate and iron. The polypeptide is Alpha-ketoglutarate-dependent dioxygenase alkB homolog 3 (Rattus norvegicus (Rat)).